The primary structure comprises 273 residues: 4-hydroxy-tetrahydrodipicolinate reductase (273 aa).

NAD(+) contacts are provided by residues 12-17 (GAGGRM) and glutamate 38. NADP(+) is bound at residue arginine 39. Residues 102–104 (GTT) and 126–129 (AANF) contribute to the NAD(+) site. Histidine 159 acts as the Proton donor/acceptor in catalysis. (S)-2,3,4,5-tetrahydrodipicolinate is bound at residue histidine 160. The active-site Proton donor is lysine 163. 169–170 (GT) contacts (S)-2,3,4,5-tetrahydrodipicolinate.

This sequence belongs to the DapB family. As to quaternary structure, homotetramer.

The protein resides in the cytoplasm. It catalyses the reaction (S)-2,3,4,5-tetrahydrodipicolinate + NAD(+) + H2O = (2S,4S)-4-hydroxy-2,3,4,5-tetrahydrodipicolinate + NADH + H(+). It carries out the reaction (S)-2,3,4,5-tetrahydrodipicolinate + NADP(+) + H2O = (2S,4S)-4-hydroxy-2,3,4,5-tetrahydrodipicolinate + NADPH + H(+). The protein operates within amino-acid biosynthesis; L-lysine biosynthesis via DAP pathway; (S)-tetrahydrodipicolinate from L-aspartate: step 4/4. Catalyzes the conversion of 4-hydroxy-tetrahydrodipicolinate (HTPA) to tetrahydrodipicolinate. The chain is 4-hydroxy-tetrahydrodipicolinate reductase from Salmonella dublin (strain CT_02021853).